We begin with the raw amino-acid sequence, 172 residues long: DCC family protein At1g52590, chloroplastic (172 aa).

The transit peptide at 1–25 (MAILIPASFGRLTITSRAQVRVRVS) directs the protein to the chloroplast.

The protein belongs to the DCC thiol-disulfide oxidoreductase family.

It is found in the plastid. The protein localises to the chloroplast. In Arabidopsis thaliana (Mouse-ear cress), this protein is DCC family protein At1g52590, chloroplastic.